Here is a 207-residue protein sequence, read N- to C-terminus: Dephospho-CoA kinase (207 aa).

Polar residues predominate over residues 1 to 11 (MTRSPAPSSPT). The interval 1–21 (MTRSPAPSSPTHPRRLGLTGS) is disordered. One can recognise a DPCK domain in the interval 15–207 (RLGLTGSIGA…DAALRQLEIT (193 aa)). 23 to 28 (GAGKST) provides a ligand contact to ATP.

Belongs to the CoaE family.

It localises to the cytoplasm. It carries out the reaction 3'-dephospho-CoA + ATP = ADP + CoA + H(+). It participates in cofactor biosynthesis; coenzyme A biosynthesis; CoA from (R)-pantothenate: step 5/5. Functionally, catalyzes the phosphorylation of the 3'-hydroxyl group of dephosphocoenzyme A to form coenzyme A. In Deinococcus radiodurans (strain ATCC 13939 / DSM 20539 / JCM 16871 / CCUG 27074 / LMG 4051 / NBRC 15346 / NCIMB 9279 / VKM B-1422 / R1), this protein is Dephospho-CoA kinase.